The primary structure comprises 220 residues: Glycerol-3-phosphate acyltransferase (220 aa).

Transmembrane regions (helical) follow at residues 11–31, 70–90, 96–116, 127–147, 153–173, and 192–212; these read INVI…GYAL, LLVL…SKLF, LQWM…FLNF, GSVV…WFFV, ISSL…FFVP, and PMVL…FNLL.

The protein belongs to the PlsY family. Probably interacts with PlsX.

Its subcellular location is the cell inner membrane. The catalysed reaction is an acyl phosphate + sn-glycerol 3-phosphate = a 1-acyl-sn-glycero-3-phosphate + phosphate. Its pathway is lipid metabolism; phospholipid metabolism. Functionally, catalyzes the transfer of an acyl group from acyl-phosphate (acyl-PO(4)) to glycerol-3-phosphate (G3P) to form lysophosphatidic acid (LPA). This enzyme utilizes acyl-phosphate as fatty acyl donor, but not acyl-CoA or acyl-ACP. In Helicobacter pylori (strain J99 / ATCC 700824) (Campylobacter pylori J99), this protein is Glycerol-3-phosphate acyltransferase.